The sequence spans 473 residues: MGAVLGVFSLASWVPCLCSGASCLLCSCCPNSKNSTVTRLIYAFILLLSTVVSYIMQRKEMETYLKKIPGFCEGGFKIHEADINADKDCDVLVGYKAVYRISFAMAIFFFVFSLLMFKVKTSKDLRAAVHNGFWFFKIAALIGIMVGSFYIPGGYFSSVWFVVGMIGAALFILIQLVLLVDFAHSWNESWVNRMEEGNPRLWYAALLSFTSAFYILSIICVGLLYTYYTKPDGCTENKFFISINLILCVVASIISIHPKIQEHQPRSGLLQSSLITLYTMYLTWSAMSNEPDRSCNPNLMSFITRITAPTLAPGNSTAVVPTPTPPSKSGSLLDSDNFIGLFVFVLCLLYSSIRTSTNSQVDKLTLSGSDSVILGDTTTSGASDEEDGQPRRAVDNEKEGVQYSYSLFHLMLCLASLYIMMTLTSWYSPDAKFQSMTSKWPAVWVKISSSWVCLLLYVWTLVAPLVLTSRDFS.

The Extracellular segment spans residues 1–96; it reads MGAVLGVFSL…KDCDVLVGYK (96 aa). Residue asparagine 34 is glycosylated (N-linked (GlcNAc...) asparagine). Residues 97–117 traverse the membrane as a helical segment; it reads AVYRISFAMAIFFFVFSLLMF. Over 118-132 the chain is Cytoplasmic; the sequence is KVKTSKDLRAAVHNG. A helical transmembrane segment spans residues 133–153; it reads FWFFKIAALIGIMVGSFYIPG. The Extracellular portion of the chain corresponds to 154–159; that stretch reads GYFSSV. Residues 160-180 form a helical membrane-spanning segment; the sequence is WFVVGMIGAALFILIQLVLLV. The Cytoplasmic segment spans residues 181-203; it reads DFAHSWNESWVNRMEEGNPRLWY. The helical transmembrane segment at 204–224 threads the bilayer; it reads AALLSFTSAFYILSIICVGLL. Residues 225–239 are Extracellular-facing; it reads YTYYTKPDGCTENKF. A helical transmembrane segment spans residues 240–260; sequence FISINLILCVVASIISIHPKI. The Cytoplasmic segment spans residues 261-329; sequence QEHQPRSGLL…VPTPTPPSKS (69 aa). The helical transmembrane segment at 330–350 threads the bilayer; the sequence is GSLLDSDNFIGLFVFVLCLLY. The Extracellular segment spans residues 351–406; sequence SSIRTSTNSQVDKLTLSGSDSVILGDTTTSGASDEEDGQPRRAVDNEKEGVQYSYS. Serine 371 bears the Phosphoserine mark. Residues 407 to 427 traverse the membrane as a helical segment; it reads LFHLMLCLASLYIMMTLTSWY. The Cytoplasmic segment spans residues 428 to 446; sequence SPDAKFQSMTSKWPAVWVK. The helical transmembrane segment at 447–467 threads the bilayer; that stretch reads ISSSWVCLLLYVWTLVAPLVL. Over 468-473 the chain is Extracellular; sequence TSRDFS.

This sequence belongs to the TDE1 family. In terms of processing, N-glycosylated. Ubiquitous. Expression levels were increased fourfold to tenfold in lung tumor tissues compared with normal pulmonary tissues.

The protein resides in the cell membrane. It localises to the golgi apparatus membrane. The protein localises to the cytoplasm. Its subcellular location is the perinuclear region. It carries out the reaction a 1,2-diacyl-sn-glycero-3-phospho-L-serine(in) = a 1,2-diacyl-sn-glycero-3-phospho-L-serine(out). The enzyme catalyses a 1,2-diacyl-sn-glycero-3-phosphocholine(in) = a 1,2-diacyl-sn-glycero-3-phosphocholine(out). It catalyses the reaction a 1,2-diacyl-sn-glycero-3-phosphoethanolamine(in) = a 1,2-diacyl-sn-glycero-3-phosphoethanolamine(out). Functionally, restriction factor required to restrict infectivity of lentiviruses, such as HIV-1: acts by inhibiting an early step of viral infection. Impairs the penetration of the viral particle into the cytoplasm. Non-ATP-dependent, non-specific lipid transporter for phosphatidylserine, phosphatidylcholine, and phosphatidylethanolamine. Functions as a scramblase that flips lipids in both directions across the membrane. Phospholipid scrambling results in HIV-1 surface exposure of phosphatidylserine and loss of membrane asymmetry, which leads to changes in HIV-1 Env conformation and loss of infectivity. In Homo sapiens (Human), this protein is Serine incorporator 3.